The following is a 524-amino-acid chain: MTNTLCLSLITLITLFISLTPTLIKSDEGIDVFLPISLNLTVLTDPFSISAASHDFGNITDENPGAVLCPSSTTEVARLLRFANGGFSYNKGSTSPASTFKVAARGQGHSLRGQASAPGGVVVNMTCLAMAAKPAAVVISADGTYADVAAGTMWVDVLKAAVDRGVSPVTWTDYLYLSVGGTLSNAGIGGQTFRHGPQISNVHELDVITGKGEMMTCSPKLNPELFYGVLGGLGQFGIITRARIALDHAPTRVKWSRILYSDFSAFKRDQERLISMTNDLGVDFLEGQLMMSNGFVDTSFFPLSDQTRVASLVNDHRIIYVLEVAKYYDRTTLPIIDQVIDTLSRTLGFAPGFMFVQDVPYFDFLNRVRNEEDKLRSLGLWEVPHPWLNIFVPGSRIQDFHDGVINGLLLNQTSTSGVTLFYPTNRNKWNNRMSTMTPDEDVFYVIGLLQSAGGSQNWQELENLNDKVIQFCENSGIKIKEYLMHYTRKEDWVKHFGPKWDDFLRKKIMFDPKRLLSPGQDIFN.

The signal sequence occupies residues 1–26; sequence MTNTLCLSLITLITLFISLTPTLIKS. Residues asparagine 39 and asparagine 58 are each glycosylated (N-linked (GlcNAc...) asparagine). The FAD-binding PCMH-type domain occupies 60 to 249; sequence TDENPGAVLC…TRARIALDHA (190 aa). Positions 104, 106, and 108 each coordinate FAD. Residue histidine 109 is modified to Pros-8alpha-FAD histidine. FAD contacts are provided by serine 110 and glutamine 114. Asparagine 124 is a glycosylation site (N-linked (GlcNAc...) asparagine). Positions 173, 178, 184, 188, and 239 each coordinate FAD. Asparagine 411 is a glycosylation site (N-linked (GlcNAc...) asparagine). The FAD site is built by tyrosine 482, serine 517, and glutamine 520.

This sequence belongs to the oxygen-dependent FAD-linked oxidoreductase family. It depends on FAD as a cofactor. As to expression, expressed in trichomes and in developing stomata of young growing leaves. Strong expression in stipules and in the root cap, but not detected in the root meristem.

Its subcellular location is the secreted. The protein localises to the extracellular space. The catalysed reaction is N(6)-dimethylallyladenine + A + H2O = 3-methyl-2-butenal + adenine + AH2. In terms of biological role, catalyzes the oxidation of cytokinins, a family of N(6)-substituted adenine derivatives that are plant hormones, where the substituent is an isopentenyl group. In Arabidopsis thaliana (Mouse-ear cress), this protein is Cytokinin dehydrogenase 4 (CKX4).